The chain runs to 429 residues: Adenylosuccinate synthetase (429 aa).

Residues G12–K18 and G40–T42 each bind GTP. D13 serves as the catalytic Proton acceptor. Residues D13 and G40 each contribute to the Mg(2+) site. Residues D13 to K16, N38 to H41, T128, R142, Q223, T238, and R302 contribute to the IMP site. H41 serves as the catalytic Proton donor. Residue T298–R304 coordinates substrate. Residues R304, L330 to D332, and S412 to G414 each bind GTP.

Belongs to the adenylosuccinate synthetase family. Homodimer. Mg(2+) serves as cofactor.

It localises to the cytoplasm. The catalysed reaction is IMP + L-aspartate + GTP = N(6)-(1,2-dicarboxyethyl)-AMP + GDP + phosphate + 2 H(+). It participates in purine metabolism; AMP biosynthesis via de novo pathway; AMP from IMP: step 1/2. Plays an important role in the de novo pathway of purine nucleotide biosynthesis. Catalyzes the first committed step in the biosynthesis of AMP from IMP. This is Adenylosuccinate synthetase from Lactobacillus johnsonii (strain CNCM I-12250 / La1 / NCC 533).